The primary structure comprises 198 residues: uncharacterized protein (198 aa).

The tract at residues 1-23 (MYFGKTRQSDQSGRVPPNQNVTT) is disordered. The segment covering 9 to 23 (SDQSGRVPPNQNVTT) has biased composition (polar residues). Residues cysteine 75, histidine 144, and arginine 149 each contribute to the Mo-molybdopterin site.

It depends on Mo-molybdopterin as a cofactor.

This is an uncharacterized protein from Bacillus subtilis (strain 168).